Reading from the N-terminus, the 238-residue chain is Small ribosomal subunit protein uS2c (238 aa).

It belongs to the universal ribosomal protein uS2 family.

The protein localises to the plastid. It localises to the chloroplast. In Oltmannsiellopsis viridis (Marine flagellate), this protein is Small ribosomal subunit protein uS2c (rps2).